We begin with the raw amino-acid sequence, 431 residues long: uncharacterized protein (431 aa).

Helical transmembrane passes span 33–53 (VARVGTATAVTALCGYAVIYL), 63–83 (FSVFGVFWGAFGLVTGAANGL), 111–131 (VSGMVGLGSLVVIAGSSPLWS), 143–163 (VALLSIGLAGFCLHATLLGML), 197–217 (LVGFIWATVAGSVAWLIMLMT), 241–261 (AHSIIAAGASAILVMGFPVLL), 273–293 (GVVILAVTLTRAPLLVPLTAM), 318–338 (LIGGVGAVGMLAAGVVGPWIM), 358–378 (AAAVAIAMLTLTGAAAVAAAL), 383–403 (SLGWVGATVGSGLLLLLPLSL), and 407–427 (TVVALLCGPLVGIGVHLVALA).

The protein to M.tuberculosis Rv1510 and Rv3630.

Its subcellular location is the cell membrane. This is an uncharacterized protein from Mycobacterium bovis (strain ATCC BAA-935 / AF2122/97).